Reading from the N-terminus, the 464-residue chain is Mannose-1-phosphate guanylyltransferase (464 aa).

The protein belongs to the mannose-6-phosphate isomerase type 2 family.

It carries out the reaction alpha-D-mannose 1-phosphate + GTP + H(+) = GDP-alpha-D-mannose + diphosphate. It participates in nucleotide-sugar biosynthesis; GDP-alpha-D-mannose biosynthesis; GDP-alpha-D-mannose from alpha-D-mannose 1-phosphate (GTP route): step 1/1. The protein operates within bacterial outer membrane biogenesis; LPS O-antigen biosynthesis. Involved in GDP-mannose biosynthesis which serves as the activated sugar nucleotide precursor for mannose residues in cell surface polysaccharides. This enzyme participates in synthesis of the LPS O7 antigen. This Escherichia coli protein is Mannose-1-phosphate guanylyltransferase (manC).